A 727-amino-acid polypeptide reads, in one-letter code: FACT complex subunit Ssrp1 (727 aa).

Disordered stretches follow at residues 458–565 (AEAR…AFML) and 596–727 (ELKD…EGSD). Composition is skewed to acidic residues over residues 464–479 (EEED…ESTD) and 487–508 (NESD…DDSD). The segment covering 510 to 519 (SGGGGDGGTD) has biased composition (gly residues). 3 stretches are compositionally biased toward basic and acidic residues: residues 529–555 (KKNE…DTGK), 596–620 (ELKD…EMRN), and 675–703 (DQEK…KSES). Residues 556–622 (PKRGTSAFML…RYQEEMRNYK (67 aa)) constitute a DNA-binding region (HMG box). The segment covering 704-727 (EGGDSDDASNASEDDDEEEDEGSD) has biased composition (acidic residues).

Belongs to the SSRP1 family. As to quaternary structure, component of the FACT complex, a stable heterodimer of dre4/spt16 and Ssrp.

The protein localises to the nucleus. It localises to the chromosome. Its subcellular location is the nucleolus. Component of the FACT complex, a general chromatin factor that acts to reorganize nucleosomes. The FACT complex is involved in multiple processes that require DNA as a template such as mRNA elongation, DNA replication and DNA repair. During transcription elongation the FACT complex acts as a histone chaperone that both destabilizes and restores nucleosomal structure. It facilitates the passage of RNA polymerase II and transcription by promoting the dissociation of one histone H2A-H2B dimer from the nucleosome, then subsequently promotes the reestablishment of the nucleosome following the passage of RNA polymerase II. Binds specifically to single-stranded DNA and RNA with highest affinity for nucleotides G and U. The FACT complex is required for expression of Hox genes. This is FACT complex subunit Ssrp1 (Ssrp) from Drosophila pseudoobscura pseudoobscura (Fruit fly).